The sequence spans 285 residues: uncharacterized protein (285 aa).

The chain crosses the membrane as a helical span at residues isoleucine 6–tryptophan 26.

It belongs to the membrane fusion protein (MFP) (TC 8.A.1) family.

Its subcellular location is the membrane. This is an uncharacterized protein from Escherichia coli (strain K12).